A 154-amino-acid chain; its full sequence is Transcriptional repressor NrdR (154 aa).

Residues 3–34 (CPYCQSEDTQVKDSRPAEDGAAIRRRRACPVC) fold into a zinc finger. The ATP-cone domain occupies 49–139 (LVVVKRTGRK…VYRNFREAKD (91 aa)).

This sequence belongs to the NrdR family. Requires Zn(2+) as cofactor.

Negatively regulates transcription of bacterial ribonucleotide reductase nrd genes and operons by binding to NrdR-boxes. The chain is Transcriptional repressor NrdR from Chelativorans sp. (strain BNC1).